Consider the following 178-residue polypeptide: Probable DNA-directed RNA polymerase subunit delta (178 aa).

The HTH HARE-type domain maps to 14–81 (LSLIDVAHFI…GNNTWGLRAW (68 aa)). Disordered stretches follow at residues 88–122 (DEEV…DYDD) and 141–178 (LDED…PEDK). 3 stretches are compositionally biased toward acidic residues: residues 105–122 (DDED…DYDD), 141–150 (LDEDEDDDDH), and 161–178 (TVED…PEDK).

Belongs to the RpoE family. As to quaternary structure, RNAP is composed of a core of 2 alpha, a beta and a beta' subunits. The core is associated with a delta subunit and one of several sigma factors.

In terms of biological role, participates in both the initiation and recycling phases of transcription. In the presence of the delta subunit, RNAP displays an increased specificity of transcription, a decreased affinity for nucleic acids, and an increased efficiency of RNA synthesis because of enhanced recycling. This chain is Probable DNA-directed RNA polymerase subunit delta, found in Listeria monocytogenes serovar 1/2a (strain ATCC BAA-679 / EGD-e).